Reading from the N-terminus, the 374-residue chain is Chaperone protein DnaJ (374 aa).

The J domain maps to 4–68 (DYYDILGVSR…ETRARYDRFG (65 aa)). A CR-type zinc finger spans residues 133–215 (GGEKQIRITH…CGGNGQAQVT (83 aa)). Residues cysteine 146, cysteine 149, cysteine 163, cysteine 166, cysteine 189, cysteine 192, cysteine 203, and cysteine 206 each coordinate Zn(2+). CXXCXGXG motif repeat units lie at residues 146–153 (CTTCNGSG), 163–170 (CGTCGGAG), 189–196 (CPTCNGKG), and 203–210 (CETCGGNG).

Belongs to the DnaJ family. In terms of assembly, homodimer. It depends on Zn(2+) as a cofactor.

It localises to the cytoplasm. Its function is as follows. Participates actively in the response to hyperosmotic and heat shock by preventing the aggregation of stress-denatured proteins and by disaggregating proteins, also in an autonomous, DnaK-independent fashion. Unfolded proteins bind initially to DnaJ; upon interaction with the DnaJ-bound protein, DnaK hydrolyzes its bound ATP, resulting in the formation of a stable complex. GrpE releases ADP from DnaK; ATP binding to DnaK triggers the release of the substrate protein, thus completing the reaction cycle. Several rounds of ATP-dependent interactions between DnaJ, DnaK and GrpE are required for fully efficient folding. Also involved, together with DnaK and GrpE, in the DNA replication of plasmids through activation of initiation proteins. The sequence is that of Chaperone protein DnaJ from Cyanothece sp. (strain PCC 7425 / ATCC 29141).